Reading from the N-terminus, the 420-residue chain is Nucleobindin-2 (420 aa).

Residues 1–24 form the signal peptide; it reads MRWRTILLQYCFLLITCLLTALEA. The DNA-binding element occupies 171–223; the sequence is KTRHEEFKKYEMMKEHERREYLKTLNEEKRKEEESKFEEMKKKHENHPKVNHP. Basic and acidic residues predominate over residues 195 to 212; that stretch reads LNEEKRKEEESKFEEMKK. The disordered stretch occupies residues 195–225; the sequence is LNEEKRKEEESKFEEMKKKHENHPKVNHPGS. The segment at 213 to 420 is binds to necdin; that stretch reads KHENHPKVNH…AGELKFEPHI (208 aa). 2 consecutive EF-hand domains span residues 241-276 and 293-328; these read PNDF…ELEK and ERLR…KEFL. Ca(2+) is bound by residues Asp254 and Asn256. Phosphoserine is present on Ser257. Asp258, Glu265, Asp306, Asn308, Asp310, and Glu317 together coordinate Ca(2+). The short motif at 304 to 334 is the GBA element; the sequence is EVDTNKDRLVTLEEFLKATEKKEFLEPDSWE. Ser332 is subject to Phosphoserine. The disordered stretch occupies residues 398–420; that stretch reads QKKLQQGIPPSGPAGELKFEPHI.

It belongs to the nucleobindin family. In terms of assembly, interacts (via GBA motif) with guanine nucleotide-binding protein G(i) alpha subunit GNAI3. Preferentially interacts with inactive rather than active GNAI3. Interaction with GNAI3 is inhibited when NUCB2 binds calcium, probably due to a conformational change which renders the GBA motif inaccessible. Binds to the postmitotic growth suppressor NDN; coexpression abolishes NUCB2 secretion. Interacts with MC4R. Predominantly expressed in spleen, testis and normal stomach.

It localises to the golgi apparatus. Its subcellular location is the membrane. It is found in the cytoplasm. The protein resides in the secreted. The protein localises to the endoplasmic reticulum. It localises to the nucleus envelope. Calcium-binding protein which may have a role in calcium homeostasis. Acts as a non-receptor guanine nucleotide exchange factor which binds to and activates guanine nucleotide-binding protein (G-protein) alpha subunit GNAI3. Its function is as follows. Anorexigenic peptide, seems to play an important role in hypothalamic pathways regulating food intake and energy homeostasis, acting in a leptin-independent manner. May also exert hypertensive roles and modulate blood pressure through directly acting on peripheral arterial resistance. In intestinal epithelial cells, plays a role in the inhibition of hepatic glucose production via MC4R receptor leading to increased cyclic adenosine monophosphate (cAMP) levels and glucagon-like peptide 1 (GLP-1) secretion. This Homo sapiens (Human) protein is Nucleobindin-2.